Consider the following 2347-residue polypeptide: Proto-oncogene tyrosine-protein kinase ROS (2347 aa).

Residues 1–27 (MKNIYCLIPKLVNFATLGCLWISVVQC) form the signal peptide. Residues 28-1859 (TVLNSCLKSC…LVGDDFWIPE (1832 aa)) lie on the Extracellular side of the membrane. N-linked (GlcNAc...) asparagine glycans are attached at residues asparagine 52, asparagine 114, and asparagine 123. 2 consecutive Fibronectin type-III domains span residues 101–196 (LPTA…VPET) and 197–285 (APLI…SSSA). Residues asparagine 324, asparagine 352, asparagine 396, asparagine 471, asparagine 607, asparagine 628, asparagine 706, asparagine 714, asparagine 732, asparagine 939, asparagine 961, asparagine 1015, asparagine 1087, asparagine 1090, asparagine 1095, asparagine 1211, asparagine 1272, asparagine 1330, asparagine 1458, asparagine 1461, asparagine 1474, asparagine 1499, asparagine 1565, asparagine 1669, asparagine 1715, asparagine 1738, and asparagine 1808 are each glycosylated (N-linked (GlcNAc...) asparagine). Positions 557-671 (LPGRPQELSV…EPSVGTTLVP (115 aa)) constitute a Fibronectin type-III 3 domain. 2 Fibronectin type-III domains span residues 947-1042 (IPDS…TVPS) and 1043-1150 (APEN…TSEI). Fibronectin type-III domains lie at 1450–1556 (DTVE…TKNG), 1557–1656 (VPEA…VEMF), 1658–1751 (TPEK…TKAG), and 1752–1854 (VPNK…VGDD). The chain crosses the membrane as a helical span at residues 1860–1882 (TSFILTIIVGIFLVVTIPLTFVW). Residues 1883 to 2347 (HRRLKNQKSA…THSGYGDGSD (465 aa)) are Cytoplasmic-facing. One can recognise a Protein kinase domain in the interval 1945–2222 (LTLRLLLGSG…DQLQLFRNFF (278 aa)). ATP is bound by residues 1951-1959 (LGSGAFGEV) and lysine 1980. Aspartate 2079 functions as the Proton acceptor in the catalytic mechanism. A Phosphotyrosine; by autocatalysis modification is found at tyrosine 2274. The disordered stretch occupies residues 2284 to 2311 (GEEKSEGPLGSQESESCGLRKEEKEPHA). Positions 2301 to 2311 (GLRKEEKEPHA) are enriched in basic and acidic residues. Tyrosine 2334 carries the phosphotyrosine; by autocatalysis modification.

Belongs to the protein kinase superfamily. Tyr protein kinase family. Insulin receptor subfamily. In terms of assembly, interacts with PTPN6 (via SH2 1 domain); the interaction is direct and promotes ROS1 dephosphorylation. Interacts with PTPN11; may activate the PI3 kinase-mTOR signaling pathway. Interacts with VAV3; constitutive interaction mediating VAV3 phosphorylation. Phosphorylated. Probably autophosphorylates. Phosphorylation at Tyr-2274 is required for the interaction with PTPN6 that mediates ROS1 dephosphorylation. Phosphorylation at Tyr-2274 stimulates the kinase activity and the activation of the ERK1 signaling cascade. Phosphorylation at Tyr-2274 and/or Tyr-2334 recruits PTPN11. Expressed in brain. Expression is increased in primary gliomas.

Its subcellular location is the cell membrane. The catalysed reaction is L-tyrosyl-[protein] + ATP = O-phospho-L-tyrosyl-[protein] + ADP + H(+). Its activity is regulated as follows. Inhibited by dephosphorylation by PTPN6. In terms of biological role, receptor tyrosine kinase (RTK) that plays a role in epithelial cell differentiation and regionalization of the proximal epididymal epithelium. NELL2 is an endogenous ligand for ROS1. Upon endogenous stimulation by NELL2, ROS1 activates the intracellular signaling pathway and triggers epididymal epithelial differentiation and subsequent sperm maturation. May activate several downstream signaling pathways related to cell differentiation, proliferation, growth and survival including the PI3 kinase-mTOR signaling pathway. Mediates the phosphorylation of PTPN11, an activator of this pathway. May also phosphorylate and activate the transcription factor STAT3 to control anchorage-independent cell growth. Mediates the phosphorylation and the activation of VAV3, a guanine nucleotide exchange factor regulating cell morphology. May activate other downstream signaling proteins including AKT1, MAPK1, MAPK3, IRS1 and PLCG2. The sequence is that of Proto-oncogene tyrosine-protein kinase ROS (ROS1) from Homo sapiens (Human).